A 215-amino-acid chain; its full sequence is UPF0441 protein SG0265 (215 aa).

Belongs to the UPF0441 family.

This Sodalis glossinidius (strain morsitans) protein is UPF0441 protein SG0265.